A 294-amino-acid polypeptide reads, in one-letter code: Probable HTH-type transcriptional regulator LrrA (294 aa).

In terms of domain architecture, HTH lysR-type spans 1–58; it reads MNITQLQILAAVVETGNFSAAALQLDLSQSAVSRAIAALEDELGVVLLSRGRFGARPT. Residues 18–37 constitute a DNA-binding region (H-T-H motif); it reads FSAAALQLDLSQSAVSRAIA.

Belongs to the LysR transcriptional regulatory family.

The sequence is that of Probable HTH-type transcriptional regulator LrrA (lrrA) from Synechococcus elongatus (strain ATCC 33912 / PCC 7942 / FACHB-805) (Anacystis nidulans R2).